Consider the following 152-residue polypeptide: Aspartate carbamoyltransferase regulatory chain (152 aa).

Residues Cys-108, Cys-113, Cys-137, and Cys-140 each contribute to the Zn(2+) site.

It belongs to the PyrI family. As to quaternary structure, contains catalytic and regulatory chains. Zn(2+) serves as cofactor.

Functionally, involved in allosteric regulation of aspartate carbamoyltransferase. The polypeptide is Aspartate carbamoyltransferase regulatory chain (Neisseria meningitidis serogroup B (strain ATCC BAA-335 / MC58)).